We begin with the raw amino-acid sequence, 160 residues long: Cytochrome c-type biogenesis protein CcmE (160 aa).

Topologically, residues 1–8 (MSAPRKTR) are cytoplasmic. A helical; Signal-anchor for type II membrane protein transmembrane segment spans residues 9-29 (LYAILAVVCGAVLTIALMLYA). The Periplasmic segment spans residues 30–160 (LSSNIDLFYT…PAAGPEGKRL (131 aa)). 2 residues coordinate heme: histidine 130 and tyrosine 134.

This sequence belongs to the CcmE/CycJ family.

Its subcellular location is the cell inner membrane. Functionally, heme chaperone required for the biogenesis of c-type cytochromes. Transiently binds heme delivered by CcmC and transfers the heme to apo-cytochromes in a process facilitated by CcmF and CcmH. This chain is Cytochrome c-type biogenesis protein CcmE, found in Pectobacterium atrosepticum (strain SCRI 1043 / ATCC BAA-672) (Erwinia carotovora subsp. atroseptica).